A 235-amino-acid chain; its full sequence is uncharacterized protein (235 aa).

In terms of domain architecture, ABC transporter spans Ile-2–Arg-235. Gly-38–Ser-45 serves as a coordination point for ATP.

This sequence belongs to the ABC transporter superfamily.

This is an uncharacterized protein from Methanocaldococcus jannaschii (strain ATCC 43067 / DSM 2661 / JAL-1 / JCM 10045 / NBRC 100440) (Methanococcus jannaschii).